The chain runs to 189 residues: Peptidyl-tRNA hydrolase (189 aa).

Y14 provides a ligand contact to tRNA. The active-site Proton acceptor is H19. TRNA is bound by residues Y64, N66, and N112.

The protein belongs to the PTH family. As to quaternary structure, monomer.

The protein resides in the cytoplasm. It catalyses the reaction an N-acyl-L-alpha-aminoacyl-tRNA + H2O = an N-acyl-L-amino acid + a tRNA + H(+). Hydrolyzes ribosome-free peptidyl-tRNAs (with 1 or more amino acids incorporated), which drop off the ribosome during protein synthesis, or as a result of ribosome stalling. Its function is as follows. Catalyzes the release of premature peptidyl moieties from peptidyl-tRNA molecules trapped in stalled 50S ribosomal subunits, and thus maintains levels of free tRNAs and 50S ribosomes. The chain is Peptidyl-tRNA hydrolase from Brevibacillus brevis (strain 47 / JCM 6285 / NBRC 100599).